Consider the following 264-residue polypeptide: uncharacterized protein (264 aa).

I8–T15 is a binding site for ATP.

This is an uncharacterized protein from Methanocaldococcus jannaschii (strain ATCC 43067 / DSM 2661 / JAL-1 / JCM 10045 / NBRC 100440) (Methanococcus jannaschii).